The following is a 147-amino-acid chain: MKTLFLLALLALVASTTSAQYSVGGGYNDVGGGGGSQQCPQERPNLGSCKDYVMERCFTMKDFPVTWPTKWWKGGCEHEVREKCCQQLSQIAPHCRCDAIRGVIQGKLGGIFGIGGGAVFKQIQRAQILPSKCNMGVDCRFPSGYYW.

The first 19 residues, 1–19 (MKTLFLLALLALVASTTSA), serve as a signal peptide directing secretion. A propeptide spanning residues 20–28 (QYSVGGGYN) is cleaved from the precursor.

Five disulfide bonds are present. Found in endosperm and aleurone layer of developing kernels, but not in the embryo.

It is found in the membrane. Its subcellular location is the secreted. It localises to the extracellular space. Its function is as follows. Acts as a membranotoxin, probably through its antibacterial and antifungal activities, contributing to the defense mechanism of the plant against predators. Forms monovalent cation-selective ion channels in membranes. Contributes to grain texture and hardness. The protein is Hordoindoline-B2 (HINB-2) of Hordeum vulgare (Barley).